Here is a 145-residue protein sequence, read N- to C-terminus: Actin-depolymerizing factor 11 (145 aa).

Residues 11 to 145 (SSGIGVAAEC…DIELLRERAH (135 aa)) enclose the ADF-H domain.

Belongs to the actin-binding proteins ADF family.

Functionally, actin-depolymerizing protein. Severs actin filaments (F-actin) and binds to actin monomers. This is Actin-depolymerizing factor 11 (ADF11) from Oryza sativa subsp. japonica (Rice).